The following is a 304-amino-acid chain: Sperm microtubule inner protein 6 (304 aa).

Belongs to the SPMIP6 family. As to quaternary structure, microtubule inner protein component of sperm flagellar doublet microtubules. Interacts with alpha-tubulin.

It localises to the cytoplasm. Its subcellular location is the cytoskeleton. The protein localises to the nucleus. The protein resides in the mitochondrion. It is found in the flagellum axoneme. In terms of biological role, may participate in intramanchette transport and midpiece formation of the sperm tail. May play a potential role in somatic cell proliferation. The protein is Sperm microtubule inner protein 6 (SPMIP6) of Bos taurus (Bovine).